The primary structure comprises 554 residues: MSHYAPFIKPYIEYNQFGWGPCDVSDMEVPYQPFCKSDRLGKISDWMLPVQDKKYTNKYASTFGSNNSQYAYFHEDDDATFHLVDGGNPRALKPYQRNRYRPNQRNNVRLHGRYVRGNAMIGVGQGGIGGSGGAGAGNKYGKGRDMRRGYAGRRFMRNAPVRLRESSVLVRSDWVSIEEIDFPRLLKLSLPNIKDGIDIVTCGALEYYDKQCDRINVKNERPLQKVDRIINVPGTIDDPVIRRLSKTMGNVFATDDIIATLMCCTRSNYSWDIVIEKLGTKVFLDKRDNAQFDLLTVNETALEPPQDSEGSINSPQSLSLEATLINHNFSQQVLKIGDQEPKHKFEEPNPFEEPGVELASVAYRYKQWQLGDDVVLIARCKHNGVIKSPSGELQFVSIKALNEWDSKAANSVEWRQKLDSQRGAVLASELRNNACKLAKWTVEAVLAGSDQLKLGYVSRVNRNDHLRHVILGLQQFKPQEFATQINLNMDNAWGVLRCLVDIVLKQPDGKYLIMKDPNKPMIRLYDIPENAFDSDGNEDEETSEDRPFLKSMAN.

Positions 291-305 (QFDLLTVNETALEPP) are RNA gate. The interval 530–554 (NAFDSDGNEDEETSEDRPFLKSMAN) is disordered.

It belongs to the eIF-3 subunit D family. As to quaternary structure, component of the eukaryotic translation initiation factor 3 (eIF-3) complex. The eIF-3 complex interacts with pix.

It localises to the cytoplasm. In terms of biological role, mRNA cap-binding component of the eukaryotic translation initiation factor 3 (eIF-3) complex, which is involved in protein synthesis of a specialized repertoire of mRNAs and, together with other initiation factors, stimulates binding of mRNA and methionyl-tRNAi to the 40S ribosome. The eIF-3 complex specifically targets and initiates translation of a subset of mRNAs involved in cell proliferation. In the eIF-3 complex, eif3d specifically recognizes and binds the 7-methylguanosine cap of a subset of mRNAs. The protein is Eukaryotic translation initiation factor 3 subunit D-2 of Drosophila mojavensis (Fruit fly).